The primary structure comprises 497 residues: tRNA-2-methylthio-N(6)-dimethylallyladenosine synthase (497 aa).

A disordered region spans residues 1-50 (MTGTSNIPTHGKEHKDAPALLPLPAPNPHHTHAAHPGDPSHDRPPSRGKL). Residues 48–165 (GKLFIKTHGC…LPDMIRARRE (118 aa)) form the MTTase N-terminal domain. Residues C57, C94, C128, C202, C206, and C209 each contribute to the [4Fe-4S] cluster site. One can recognise a Radical SAM core domain in the interval 188–430 (RAEGPSAFVS…QKHINAYAAD (243 aa)). The TRAM domain maps to 433–496 (KRMIGTVQTV…TNSLRGRVHT (64 aa)).

This sequence belongs to the methylthiotransferase family. MiaB subfamily. As to quaternary structure, monomer. Requires [4Fe-4S] cluster as cofactor.

It is found in the cytoplasm. It catalyses the reaction N(6)-dimethylallyladenosine(37) in tRNA + (sulfur carrier)-SH + AH2 + 2 S-adenosyl-L-methionine = 2-methylsulfanyl-N(6)-dimethylallyladenosine(37) in tRNA + (sulfur carrier)-H + 5'-deoxyadenosine + L-methionine + A + S-adenosyl-L-homocysteine + 2 H(+). Its function is as follows. Catalyzes the methylthiolation of N6-(dimethylallyl)adenosine (i(6)A), leading to the formation of 2-methylthio-N6-(dimethylallyl)adenosine (ms(2)i(6)A) at position 37 in tRNAs that read codons beginning with uridine. This Xylella fastidiosa (strain M12) protein is tRNA-2-methylthio-N(6)-dimethylallyladenosine synthase.